The chain runs to 235 residues: Serine protease SplA (235 aa).

Residues 1–35 form the signal peptide; the sequence is MNKNVMIKGLTALTILTSLGFAENISDQPHSIAKA. Active-site charge relay system residues include His-74, Asp-113, and Ser-189.

Belongs to the peptidase S1B family.

It localises to the secreted. The polypeptide is Serine protease SplA (splA) (Staphylococcus aureus).